The sequence spans 130 residues: 3-aminoacrylate deaminase RutC (130 aa).

This sequence belongs to the RutC family.

It catalyses the reaction (Z)-3-aminoacrylate + H2O + H(+) = 3-oxopropanoate + NH4(+). Its function is as follows. Involved in pyrimidine catabolism. Catalyzes the deamination of 3-aminoacrylate to malonic semialdehyde, a reaction that can also occur spontaneously. RutC may facilitate the reaction and modulate the metabolic fitness, rather than catalyzing essential functions. The chain is 3-aminoacrylate deaminase RutC from Methylorubrum extorquens (strain CM4 / NCIMB 13688) (Methylobacterium extorquens).